The primary structure comprises 151 residues: Transcriptional regulator MraZ (151 aa).

2 consecutive SpoVT-AbrB domains span residues isoleucine 5–glutamate 52 and alanine 81–glutamate 124.

It belongs to the MraZ family. Forms oligomers.

The protein resides in the cytoplasm. Its subcellular location is the nucleoid. The chain is Transcriptional regulator MraZ from Marinomonas sp. (strain MWYL1).